The chain runs to 96 residues: MNILGMKLFAHHKGGGSSANGRNSAGRRLGAKAGDGQTIHAGTIIYRQRGTKIHPGKNVGQGGDDTLFALVNGVVKFERLGKYKKQVSVYPAEEAK.

Residues 12–33 (HKGGGSSANGRNSAGRRLGAKA) are disordered. Low complexity predominate over residues 19-28 (ANGRNSAGRR).

The protein belongs to the bacterial ribosomal protein bL27 family.

This chain is Large ribosomal subunit protein bL27, found in Lactobacillus helveticus (strain DPC 4571).